We begin with the raw amino-acid sequence, 622 residues long: Threonine--tRNA ligase (622 aa).

The editing domain stretch occupies residues 1–134 (MKTLLIHSDY…GHPLSELSRK (134 aa)). The catalytic stretch occupies residues 199–498 (PHVKYIKEKE…TLEDKPPALP (300 aa)). Cys-291, His-343, and His-467 together coordinate Zn(2+).

The protein belongs to the class-II aminoacyl-tRNA synthetase family. Homodimer. Zn(2+) is required as a cofactor.

It is found in the cytoplasm. It catalyses the reaction tRNA(Thr) + L-threonine + ATP = L-threonyl-tRNA(Thr) + AMP + diphosphate + H(+). Its function is as follows. Catalyzes the attachment of threonine to tRNA(Thr) in a two-step reaction: L-threonine is first activated by ATP to form Thr-AMP and then transferred to the acceptor end of tRNA(Thr). Also edits incorrectly charged L-seryl-tRNA(Thr). The chain is Threonine--tRNA ligase from Methanococcus vannielii (strain ATCC 35089 / DSM 1224 / JCM 13029 / OCM 148 / SB).